The chain runs to 631 residues: Chaperone protein DnaK (631 aa).

At T197 the chain carries Phosphothreonine; by autocatalysis. The interval 600-631 (KKENPQAADAQQGNTANAGKKKDDDVIDAEVE) is disordered.

Belongs to the heat shock protein 70 family.

Functionally, acts as a chaperone. The sequence is that of Chaperone protein DnaK from Wolinella succinogenes (strain ATCC 29543 / DSM 1740 / CCUG 13145 / JCM 31913 / LMG 7466 / NCTC 11488 / FDC 602W) (Vibrio succinogenes).